A 305-amino-acid polypeptide reads, in one-letter code: Homoserine kinase (305 aa).

90–100 lines the ATP pocket; that stretch reads PLARGLGSSAS.

This sequence belongs to the GHMP kinase family. Homoserine kinase subfamily.

It localises to the cytoplasm. It catalyses the reaction L-homoserine + ATP = O-phospho-L-homoserine + ADP + H(+). Its pathway is amino-acid biosynthesis; L-threonine biosynthesis; L-threonine from L-aspartate: step 4/5. Its function is as follows. Catalyzes the ATP-dependent phosphorylation of L-homoserine to L-homoserine phosphate. The polypeptide is Homoserine kinase (Staphylococcus saprophyticus subsp. saprophyticus (strain ATCC 15305 / DSM 20229 / NCIMB 8711 / NCTC 7292 / S-41)).